Consider the following 503-residue polypeptide: Maturase K (503 aa).

This sequence belongs to the intron maturase 2 family. MatK subfamily.

The protein localises to the plastid. It is found in the chloroplast. Its function is as follows. Usually encoded in the trnK tRNA gene intron. Probably assists in splicing its own and other chloroplast group II introns. This is Maturase K from Psilotum nudum (Whisk fern).